Consider the following 365-residue polypeptide: Phosphoserine aminotransferase (365 aa).

Arg42 is an L-glutamate binding site. Pyridoxal 5'-phosphate is bound by residues 76 to 77, Trp103, Thr154, Asp175, and Gln198; that span reads AR. Residue Lys199 is modified to N6-(pyridoxal phosphate)lysine. 242 to 243 contributes to the pyridoxal 5'-phosphate binding site; sequence NT.

The protein belongs to the class-V pyridoxal-phosphate-dependent aminotransferase family. SerC subfamily. Homodimer. Pyridoxal 5'-phosphate serves as cofactor.

The protein localises to the cytoplasm. The catalysed reaction is O-phospho-L-serine + 2-oxoglutarate = 3-phosphooxypyruvate + L-glutamate. It carries out the reaction 4-(phosphooxy)-L-threonine + 2-oxoglutarate = (R)-3-hydroxy-2-oxo-4-phosphooxybutanoate + L-glutamate. It functions in the pathway amino-acid biosynthesis; L-serine biosynthesis; L-serine from 3-phospho-D-glycerate: step 2/3. It participates in cofactor biosynthesis; pyridoxine 5'-phosphate biosynthesis; pyridoxine 5'-phosphate from D-erythrose 4-phosphate: step 3/5. In terms of biological role, catalyzes the reversible conversion of 3-phosphohydroxypyruvate to phosphoserine and of 3-hydroxy-2-oxo-4-phosphonooxybutanoate to phosphohydroxythreonine. This chain is Phosphoserine aminotransferase, found in Blochmanniella floridana.